The chain runs to 541 residues: 3-oxoacyl-[acyl-carrier-protein] synthase II, chloroplastic (541 aa).

Residues 1–103 constitute a chloroplast transit peptide; that stretch reads MVGASSSYAS…NRNQRRLNRA (103 aa). In terms of domain architecture, Ketosynthase family 3 (KS3) spans 129–539; sequence QRRVVVTGMG…GHNSSIIFAP (411 aa). Active-site for beta-ketoacyl synthase activity residues include C292, H432, and H468.

This sequence belongs to the thiolase-like superfamily. Beta-ketoacyl-ACP synthases family. In terms of assembly, homodimer. As to expression, mostly expressed in siliques, and, to a lower extent, in leaves, stems, flower buds, and flowers.

The protein resides in the plastid. Its subcellular location is the chloroplast stroma. It carries out the reaction a fatty acyl-[ACP] + malonyl-[ACP] + H(+) = a 3-oxoacyl-[ACP] + holo-[ACP] + CO2. In terms of biological role, essential protein that catalyzes the condensation reaction of fatty acid synthesis by the addition to an acyl acceptor of two carbons from malonyl-ACP. Specific for elongation from C-16 and C-16 to unsaturated C-18 fatty acids. Confers resistance to low temperatures by maintaining chloroplast membranes integrity. Involved in the regulation of fatty acids ratios during seed metabolism. Required for embryo development, especially at the transition from the globular to the heart stage. This Arabidopsis thaliana (Mouse-ear cress) protein is 3-oxoacyl-[acyl-carrier-protein] synthase II, chloroplastic (KAS2).